A 210-amino-acid polypeptide reads, in one-letter code: Prolactin-2 (210 aa).

The signal sequence occupies residues 1–23; it reads MARRSQGTKLHLAVLCLVVSCHA. Cystine bridges form between C69–C183 and C200–C210.

The protein belongs to the somatotropin/prolactin family.

It localises to the secreted. This Oncorhynchus keta (Chum salmon) protein is Prolactin-2 (prl2).